Consider the following 403-residue polypeptide: CCA-adding enzyme (403 aa).

ATP contacts are provided by Gly-32 and Arg-35. The CTP site is built by Gly-32 and Arg-35. Residues Asp-45 and Asp-47 each contribute to the Mg(2+) site. The ATP site is built by Arg-116, Asp-159, Arg-162, Arg-165, and Arg-168. 5 residues coordinate CTP: Arg-116, Asp-159, Arg-162, Arg-165, and Arg-168.

Belongs to the tRNA nucleotidyltransferase/poly(A) polymerase family. Bacterial CCA-adding enzyme type 3 subfamily. Homodimer. Mg(2+) serves as cofactor.

The enzyme catalyses a tRNA precursor + 2 CTP + ATP = a tRNA with a 3' CCA end + 3 diphosphate. It carries out the reaction a tRNA with a 3' CCA end + 2 CTP + ATP = a tRNA with a 3' CCACCA end + 3 diphosphate. In terms of biological role, catalyzes the addition and repair of the essential 3'-terminal CCA sequence in tRNAs without using a nucleic acid template. Adds these three nucleotides in the order of C, C, and A to the tRNA nucleotide-73, using CTP and ATP as substrates and producing inorganic pyrophosphate. tRNA 3'-terminal CCA addition is required both for tRNA processing and repair. Also involved in tRNA surveillance by mediating tandem CCA addition to generate a CCACCA at the 3' terminus of unstable tRNAs. While stable tRNAs receive only 3'-terminal CCA, unstable tRNAs are marked with CCACCA and rapidly degraded. In Streptococcus uberis (strain ATCC BAA-854 / 0140J), this protein is CCA-adding enzyme.